The chain runs to 687 residues: Putative lipase YDR444W (687 aa).

Catalysis depends on Ser284, which acts as the Charge relay system. 3 disordered regions span residues 429–472, 491–513, and 650–687; these read IRKK…AESP, KINK…EQGV, and ELAE…ENAT. Low complexity predominate over residues 436–463; the sequence is SPTSSEFVSSDSPESSGASSPSNENGNN. A compositionally biased stretch (basic and acidic residues) spans 670 to 681; that stretch reads RSNEYNEGEISK.

The protein belongs to the putative lipase ROG1 family.

It localises to the cytoplasm. In Saccharomyces cerevisiae (strain ATCC 204508 / S288c) (Baker's yeast), this protein is Putative lipase YDR444W.